A 187-amino-acid chain; its full sequence is Shikimate kinase (187 aa).

19–24 (GSGKST) contributes to the ATP binding site. Serine 23 is a Mg(2+) binding site. Substrate is bound by residues aspartate 41, arginine 65, and glycine 87. An ATP-binding site is contributed by arginine 124. Arginine 143 contributes to the substrate binding site. An ATP-binding site is contributed by arginine 160.

Belongs to the shikimate kinase family. In terms of assembly, monomer. It depends on Mg(2+) as a cofactor.

The protein localises to the cytoplasm. The catalysed reaction is shikimate + ATP = 3-phosphoshikimate + ADP + H(+). It participates in metabolic intermediate biosynthesis; chorismate biosynthesis; chorismate from D-erythrose 4-phosphate and phosphoenolpyruvate: step 5/7. Catalyzes the specific phosphorylation of the 3-hydroxyl group of shikimic acid using ATP as a cosubstrate. The polypeptide is Shikimate kinase (Rippkaea orientalis (strain PCC 8801 / RF-1) (Cyanothece sp. (strain PCC 8801))).